A 216-amino-acid chain; its full sequence is MQASLPGEKKVDTERLKRDLCPRKPIEIKYFSQICNDMMNKKDRLGDILHIILRACALNFGAGPRGGAGDEEDRSITNEEPIIPSVDEHGLKVCKLRSPNTPRRLRKTLDAVKALLVSSCACTARDLDIFDDNNGVAMWKWIKILYHEVAQETTLKDSYRITLVPSSDGISDTLTVIQSFSYSLLPVLSATYTSMIQQDASNCTLITTRTVHRSLD.

Belongs to the helicase family. Yeast subtelomeric Y' repeat subfamily.

This is an uncharacterized protein from Saccharomyces cerevisiae (strain ATCC 204508 / S288c) (Baker's yeast).